The chain runs to 139 residues: Hydrogenase maturation factor HypA (139 aa).

His2 serves as a coordination point for Ni(2+). The Zn(2+) site is built by Cys73, Cys76, Cys110, and Cys113.

It belongs to the HypA/HybF family.

Involved in the maturation of [NiFe] hydrogenases. Required for nickel insertion into the metal center of the hydrogenase. This Thermococcus gammatolerans (strain DSM 15229 / JCM 11827 / EJ3) protein is Hydrogenase maturation factor HypA.